An 81-amino-acid chain; its full sequence is Photosystem I iron-sulfur center (81 aa).

4Fe-4S ferredoxin-type domains lie at Ser-2–Trp-31 and Ile-39–Tyr-68. [4Fe-4S] cluster contacts are provided by Cys-11, Cys-14, Cys-17, Cys-21, Cys-48, Cys-51, Cys-54, and Cys-58.

As to quaternary structure, the eukaryotic PSI reaction center is composed of at least 11 subunits. The cofactor is [4Fe-4S] cluster.

Its subcellular location is the plastid thylakoid membrane. It catalyses the reaction reduced [plastocyanin] + hnu + oxidized [2Fe-2S]-[ferredoxin] = oxidized [plastocyanin] + reduced [2Fe-2S]-[ferredoxin]. Apoprotein for the two 4Fe-4S centers FA and FB of photosystem I (PSI); essential for photochemical activity. FB is the terminal electron acceptor of PSI, donating electrons to ferredoxin. The C-terminus interacts with PsaA/B/D and helps assemble the protein into the PSI complex. Required for binding of PsaD and PsaE to PSI. PSI is a plastocyanin-ferredoxin oxidoreductase, converting photonic excitation into a charge separation, which transfers an electron from the donor P700 chlorophyll pair to the spectroscopically characterized acceptors A0, A1, FX, FA and FB in turn. This is Photosystem I iron-sulfur center from Cuscuta exaltata (Tall dodder).